The chain runs to 1241 residues: MSSAPRRPAKGADSFCTPEPESLGPGTPGFPEQEEDELHRTLGVERFEEILQEAGSRGGEEPGRSYGEEDFEYHRQSSHHIHHPLSTHLPPDARRRKTPQGPGRKPRRRPGASPTGETPTIEEGEEDEDEASEAEGARALTQPSPVSTPSSVQFFLQEDDSADRKAERTSPSSPAPLPHQEATPRASKGAQAGTQVEEAEAEAVAVASGTAGGDDGGASGRPLPKAQPGHRSYNLQERRRIGSMTGAEQALLPRVPTDEIEAQTLATADLDLMKSHRFEDVPGVRRHLVRKNAKGSTQSGREGREPGPTPRARPRAPHKPHEVFVELNELLLDKNQEPQWRETARWIKFEEDVEEETERWGKPHVASLSFRSLLELRRTLAHGAVLLDLDQQTLPGVAHQVVEQMVISDQIKAEDRANVLRALLLKHSHPSDEKDFSFPRNISAGSLGSLLGHHHGQGAESDPHVTEPLMGGVPETRLEVERERELPPPAPPAGITRSKSKHELKLLEKIPENAEATVVLVGCVEFLSRPTMAFVRLREAVELDAVLEVPVPVRFLFLLLGPSSANMDYHEIGRSISTLMSDKQFHEAAYLADEREDLLTAINAFLDCSVVLPPSEVQGEELLRSVAHFQRQMLKKREEQGRLLPTGAGLEPKSAQDKALLQMVEAAGAAEDDPLRRTGRPFGGLIRDVRRRYPHYLSDFRDALDPQCLAAVIFIYFAALSPAITFGGLLGEKTQDLIGVSELIMSTALQGVVFCLLGAQPLLVIGFSGPLLVFEEAFFSFCSSNHLEYLVGRVWIGFWLVFLALLMVALEGSFLVRFVSRFTQEIFAFLISLIFIYETFYKLVKIFQEHPLHGCSASNSSEVDGGENMTWAGARPTLGPGNRSLAGQSGQGKPRGQPNTALLSLVLMAGTFFIAFFLRKFKNSRFFPGRIRRVIGDFGVPIAILIMVLVDYSIEDTYTQKLSVPSGFSVTAPEKRGWVINPLGEKSPFPVWMMVASLLPAILVFILIFMETQITTLIISKKERMLQKGSGFHLDLLLIVAMGGICALFGLPWLAAATVRSVTHANALTVMSKAVAPGDKPKIQEVKEQRVTGLLVALLVGLSIVIGDLLRQIPLAVLFGIFLYMGVTSLNGIQFYERLHLLLMPPKHHPDVTYVKKVRTLRMHLFTALQLLCLALLWAVMSTAASLAFPFILILTVPLRMVVLTRIFTDREMKCLDANEAEPVFDEREGVDEYNEMPMPV.

A disordered region spans residues 1–240; that stretch reads MSSAPRRPAK…RSYNLQERRR (240 aa). Over 1-707 the chain is Cytoplasmic; that stretch reads MSSAPRRPAK…SDFRDALDPQ (707 aa). 2 stretches are compositionally biased toward basic and acidic residues: residues 37–49 and 58–75; these read ELHRTLGVERFEE and GGEEPGRSYGEEDFEYHR. Composition is skewed to basic residues over residues 76–85 and 94–110; these read QSSHHIHHPL and RRRKTPQGPGRKPRRRP. Phosphoserine occurs at positions 113, 132, 144, 170, 172, and 173. Residues 120–133 are compositionally biased toward acidic residues; the sequence is TIEEGEEDEDEASE. The span at 141–155 shows a compositional bias: low complexity; that stretch reads TQPSPVSTPSSVQFF. Residue T183 is modified to Phosphothreonine. Residues 189-209 are compositionally biased toward low complexity; the sequence is GAQAGTQVEEAEAEAVAVASG. Positions 210 to 219 are enriched in gly residues; the sequence is TAGGDDGGAS. S243 carries the post-translational modification Phosphoserine. Residue T257 is modified to Phosphothreonine. Position 274 is an N6-methyllysine (K274). The interval 288–320 is disordered; sequence LVRKNAKGSTQSGREGREPGPTPRARPRAPHKP. At S443 the chain carries Phosphoserine. The interval 449-471 is disordered; it reads SLLGHHHGQGAESDPHVTEPLMG. The next 4 helical transmembrane spans lie at 708–731, 737–774, 784–816, and 826–847; these read CLAAVIFIYFAALSPAITFGGLLG, LIGVSELIMSTALQGVVFCLLGAQPLLVIGFSGPLLVF, SNHLEYLVGRVWIGFWLVFLALLMVALEGSFLV, and IFAFLISLIFIYETFYKLVKIF. Residues 708 to 1241 are membrane (anion exchange); sequence CLAAVIFIYF…DEYNEMPMPV (534 aa). Over 848 to 900 the chain is Extracellular; that stretch reads QEHPLHGCSASNSSEVDGGENMTWAGARPTLGPGNRSLAGQSGQGKPRGQPNT. N-linked (GlcNAc...) asparagine glycosylation is found at N859, N868, and N882. A helical transmembrane segment spans residues 901 to 918; that stretch reads ALLSLVLMAGTFFIAFFL. The Cytoplasmic portion of the chain corresponds to 919–933; the sequence is RKFKNSRFFPGRIRR. Transmembrane regions (helical) follow at residues 934–954, 988–1010, 1036–1059, 1091–1136, and 1163–1199; these read VIGDFGVPIAILIMVLVDYSI, PFPVWMMVASLLPAILVFILIFM, LLLIVAMGGICALFGLPWLAAATV, VTGL…IQFY, and MHLFTALQLLCLALLWAVMSTAASLAFPFILILTVPL. C1173 carries S-palmitoyl cysteine lipidation.

The protein belongs to the anion exchanger (TC 2.A.31) family. As to expression, expressed in the liver, stomach, kidney, prostate, thyroid and rectum. In terms of tissue distribution, expressed in the liver and kidney.

The protein localises to the apical cell membrane. It is found in the basolateral cell membrane. It carries out the reaction hydrogencarbonate(in) + chloride(out) = hydrogencarbonate(out) + chloride(in). Its function is as follows. Sodium-independent anion exchanger which mediates the electroneutral exchange of chloride for bicarbonate ions across the cell membrane. Plays an important role in osteoclast differentiation and function. Regulates bone resorption and calpain-dependent actin cytoskeleton organization in osteoclasts via anion exchange-dependent control of pH. Essential for intracellular pH regulation in CD8(+) T-cells upon CD3 stimulation, modulating CD8(+) T-cell responses. In Homo sapiens (Human), this protein is Anion exchange protein 2 (SLC4A2).